Reading from the N-terminus, the 401-residue chain is E3 ubiquitin-protein ligase DA2 (401 aa).

The segment at 59-102 (CPICFLYYPSLNRSRCCMKSICTECFLQMKNPNSARPTQCPFCK) adopts an RING-type; degenerate zinc-finger fold. Positions 139-153 (KEMQDDEEKMQKRLE) are enriched in basic and acidic residues. The tract at residues 139 to 164 (KEMQDDEEKMQKRLESCSSSTSAMTG) is disordered.

In terms of assembly, interacts with DA1 (via C-terminus).

It carries out the reaction S-ubiquitinyl-[E2 ubiquitin-conjugating enzyme]-L-cysteine + [acceptor protein]-L-lysine = [E2 ubiquitin-conjugating enzyme]-L-cysteine + N(6)-ubiquitinyl-[acceptor protein]-L-lysine.. The protein operates within protein modification; protein ubiquitination. Its function is as follows. E3 ubiquitin-protein ligase involved in the regulation of organ and seed size. Acts synergistically with DA1 to regulate seed size. Functions synergistically with DA1 to restrict cell proliferation in the maternal integuments of ovules and developing seeds. Seems to function independently of BB. Possesses E3 ubiquitin-protein ligase activity in vitro. Polyubiquitinates DA1, DAR1 and DAR2, but not DAR3. The polypeptide is E3 ubiquitin-protein ligase DA2 (Arabidopsis thaliana (Mouse-ear cress)).